The following is a 572-amino-acid chain: Sulfate adenylyltransferase (572 aa).

The N-terminal stretch occupies residues 1 to 169 (MANAPHGGVL…IEAVNKLNHY (169 aa)). The segment at 170–393 (DYVALRYTPA…LRESNPPRAT (224 aa)) is catalytic. Glutamine 197 is a sulfate binding site. ATP is bound by residues 197–200 (QTRN) and 291–294 (GRDH). Residues threonine 198, arginine 199, and asparagine 200 contribute to the active site. Arginine 199 lines the sulfate pocket. Alanine 295 contacts sulfate. ATP is bound at residue valine 333. Residues 394–572 (QGFTIFLTGY…LESQGFLERQ (179 aa)) form an allosteric regulation domain; adenylyl-sulfate kinase-like region. 3'-phosphoadenylyl sulfate is bound by residues 433 to 436 (DTVR), arginine 450, 476 to 477 (IA), and arginine 514.

In the N-terminal section; belongs to the sulfate adenylyltransferase family. The protein in the C-terminal section; belongs to the APS kinase family. In terms of assembly, homohexamer. Dimer of trimers.

The protein localises to the cytoplasm. The enzyme catalyses sulfate + ATP + H(+) = adenosine 5'-phosphosulfate + diphosphate. It participates in sulfur metabolism; hydrogen sulfide biosynthesis; sulfite from sulfate: step 1/3. Allosterically inhibited by 3'-phosphoadenosine 5'-phosphosulfate (PAPS). In terms of biological role, catalyzes the first intracellular reaction of sulfate assimilation, forming adenosine-5'-phosphosulfate (APS) from inorganic sulfate and ATP. Plays an important role in sulfate activation as a component of the biosynthesis pathway of sulfur-containing amino acids. This Penicillium chrysogenum (Penicillium notatum) protein is Sulfate adenylyltransferase.